We begin with the raw amino-acid sequence, 368 residues long: Single-stranded DNA-binding protein 3 (368 aa).

The 33-residue stretch at 16 to 48 (AREKLALYVYEYLLHVGAQKSAQTFLSEIRWEK) folds into the LisH domain. The disordered stretch occupies residues 100–368 (PVLGNIPPND…NYSPSMTMSV (269 aa)). Over residues 126-139 (GSQPSPHAQPPPHN) the composition is skewed to pro residues. Low complexity-rich tracts occupy residues 174 to 189 (PNMG…PRGM), 211 to 220 (GPGMPGINMG), and 230 to 248 (PSSA…TYVG). Residues 252-262 (GGGPPGTPIMP) show a composition bias toward pro residues. Over residues 265 to 276 (ADSTNSSDNIYT) the composition is skewed to polar residues. The segment covering 295–305 (GSDGPMGGMGG) has biased composition (gly residues). The span at 326-337 (NSPNNISGISNP) shows a compositional bias: low complexity. Positions 353-368 (HSFQNDNYSPSMTMSV) are enriched in polar residues.

In terms of tissue distribution, expressed in embryonic fibroblasts and chondrocytes.

It localises to the nucleus. In terms of biological role, may be involved in transcription regulation of the alpha 2(I) collagen gene where it binds to the single-stranded polypyrimidine sequences in the promoter region. This Gallus gallus (Chicken) protein is Single-stranded DNA-binding protein 3 (SSBP3).